A 95-amino-acid polypeptide reads, in one-letter code: Protein TusB (95 aa).

It belongs to the DsrH/TusB family. In terms of assembly, heterohexamer, formed by a dimer of trimers. The hexameric TusBCD complex contains 2 copies each of TusB, TusC and TusD. The TusBCD complex interacts with TusE.

It is found in the cytoplasm. Its function is as follows. Part of a sulfur-relay system required for 2-thiolation of 5-methylaminomethyl-2-thiouridine (mnm(5)s(2)U) at tRNA wobble positions. The sequence is that of Protein TusB from Photorhabdus laumondii subsp. laumondii (strain DSM 15139 / CIP 105565 / TT01) (Photorhabdus luminescens subsp. laumondii).